Here is a 283-residue protein sequence, read N- to C-terminus: Bifunctional protein FolD (283 aa).

NADP(+)-binding positions include 164–166, Ser189, and Ile230; that span reads GRS.

Belongs to the tetrahydrofolate dehydrogenase/cyclohydrolase family. Homodimer.

It catalyses the reaction (6R)-5,10-methylene-5,6,7,8-tetrahydrofolate + NADP(+) = (6R)-5,10-methenyltetrahydrofolate + NADPH. It carries out the reaction (6R)-5,10-methenyltetrahydrofolate + H2O = (6R)-10-formyltetrahydrofolate + H(+). It participates in one-carbon metabolism; tetrahydrofolate interconversion. Functionally, catalyzes the oxidation of 5,10-methylenetetrahydrofolate to 5,10-methenyltetrahydrofolate and then the hydrolysis of 5,10-methenyltetrahydrofolate to 10-formyltetrahydrofolate. The protein is Bifunctional protein FolD of Lactobacillus delbrueckii subsp. bulgaricus (strain ATCC 11842 / DSM 20081 / BCRC 10696 / JCM 1002 / NBRC 13953 / NCIMB 11778 / NCTC 12712 / WDCM 00102 / Lb 14).